The sequence spans 259 residues: Imidazole glycerol phosphate synthase subunit HisF (259 aa).

Residues Asp-11 and Asp-130 contribute to the active site.

Belongs to the HisA/HisF family. As to quaternary structure, heterodimer of HisH and HisF.

The protein resides in the cytoplasm. The enzyme catalyses 5-[(5-phospho-1-deoxy-D-ribulos-1-ylimino)methylamino]-1-(5-phospho-beta-D-ribosyl)imidazole-4-carboxamide + L-glutamine = D-erythro-1-(imidazol-4-yl)glycerol 3-phosphate + 5-amino-1-(5-phospho-beta-D-ribosyl)imidazole-4-carboxamide + L-glutamate + H(+). It participates in amino-acid biosynthesis; L-histidine biosynthesis; L-histidine from 5-phospho-alpha-D-ribose 1-diphosphate: step 5/9. Its function is as follows. IGPS catalyzes the conversion of PRFAR and glutamine to IGP, AICAR and glutamate. The HisF subunit catalyzes the cyclization activity that produces IGP and AICAR from PRFAR using the ammonia provided by the HisH subunit. In Lactococcus lactis subsp. cremoris (strain SK11), this protein is Imidazole glycerol phosphate synthase subunit HisF.